Reading from the N-terminus, the 359-residue chain is Protein Wnt-9b (359 aa).

Residues 1–23 form the signal peptide; it reads MRPAPALALAALCLLVLPAAAAA. 11 disulfide bridges follow: Cys-91–Cys-102, Cys-137–Cys-145, Cys-147–Cys-164, Cys-212–Cys-226, Cys-214–Cys-221, Cys-293–Cys-318, Cys-307–Cys-313, Cys-317–Cys-357, Cys-333–Cys-348, Cys-335–Cys-345, and Cys-340–Cys-341. An N-linked (GlcNAc...) asparagine glycan is attached at Asn-101. Ser-218 carries O-palmitoleoyl serine; by PORCN lipidation.

The protein belongs to the Wnt family. As to quaternary structure, forms a soluble 1:1 complex with AFM; this prevents oligomerization and is required for prolonged biological activity. The complex with AFM may represent the physiological form in body fluids. Component of the Wnt-Fzd-LRP5-LRP6 signaling complex that contains a WNT protein, a FZD protein and LRP5 or LRP6. Interacts directly in the complex with LRP6. Interacts with PKD1 (via extracellular domain). Palmitoleoylation is required for efficient binding to frizzled receptors. Depalmitoleoylation leads to Wnt signaling pathway inhibition.

The protein localises to the secreted. It is found in the extracellular space. The protein resides in the extracellular matrix. Ligand for members of the frizzled family of seven transmembrane receptors. Functions in the canonical Wnt/beta-catenin signaling pathway. Required for normal embryonic kidney development, and for normal development of the urogenital tract, including uterus and part of the oviduct and the upper vagina in females, and epididymis and vas deferens in males. Activates a signaling cascade in the metanephric mesenchyme that induces tubulogenesis. Acts upstream of WNT4 in the signaling pathways that mediate development of kidney tubules and the Muellerian ducts. Plays a role in cranofacial development and is required for normal fusion of the palate during embryonic development. This Mus musculus (Mouse) protein is Protein Wnt-9b (Wnt9b).